Reading from the N-terminus, the 953-residue chain is Translation initiation factor IF-2 (953 aa).

Positions 55–340 are disordered; sequence GVTTEAPAAS…KSKRQKRNEY (286 aa). The span at 81–93 shows a compositional bias: low complexity; it reads KPAATPQQAAKPA. A compositionally biased stretch (pro residues) spans 110–119; the sequence is PKPAAKPVPK. Composition is skewed to low complexity over residues 123-133 and 143-160; these read SAAKAESSAPK and KPAAQSSTTATPGSMPRP. The span at 202–219 shows a compositional bias: gly residues; sequence PGGGPRPGGNRPQGGQGG. Over residues 233–248 the composition is skewed to low complexity; that stretch reads QPRPQGGSRSQQSGGQ. The segment covering 280–323 has biased composition (gly residues); it reads NGRGGAGGQGGRPGFGGGRPGGGGSAGGRGGRRGGTAGAFGRPG. Positions 327-336 are enriched in basic residues; sequence RKGRKSKRQK. A tr-type G domain is found at 449 to 621; sequence KRPPVVTVMG…VLLTADASLD (173 aa). A G1 region spans residues 458-465; that stretch reads GHVDHGKT. Residue 458-465 participates in GTP binding; sequence GHVDHGKT. Positions 483 to 487 are G2; that stretch reads GITQG. Positions 508 to 511 are G3; the sequence is DTPG. Residues 508 to 512 and 562 to 565 contribute to the GTP site; these read DTPGH and NKID. The segment at 562–565 is G4; the sequence is NKID. Residues 598-600 form a G5 region; that stretch reads SAK.

This sequence belongs to the TRAFAC class translation factor GTPase superfamily. Classic translation factor GTPase family. IF-2 subfamily.

The protein resides in the cytoplasm. Its function is as follows. One of the essential components for the initiation of protein synthesis. Protects formylmethionyl-tRNA from spontaneous hydrolysis and promotes its binding to the 30S ribosomal subunits. Also involved in the hydrolysis of GTP during the formation of the 70S ribosomal complex. The polypeptide is Translation initiation factor IF-2 (Corynebacterium diphtheriae (strain ATCC 700971 / NCTC 13129 / Biotype gravis)).